The primary structure comprises 370 residues: UDP-3-O-acylglucosamine N-acyltransferase (370 aa).

His252 functions as the Proton acceptor in the catalytic mechanism. The tract at residues 348–370 is disordered; it reads NAAAEKRDGPAPNAASKATGDKV.

This sequence belongs to the transferase hexapeptide repeat family. LpxD subfamily. Homotrimer.

The catalysed reaction is a UDP-3-O-[(3R)-3-hydroxyacyl]-alpha-D-glucosamine + a (3R)-hydroxyacyl-[ACP] = a UDP-2-N,3-O-bis[(3R)-3-hydroxyacyl]-alpha-D-glucosamine + holo-[ACP] + H(+). The protein operates within bacterial outer membrane biogenesis; LPS lipid A biosynthesis. Functionally, catalyzes the N-acylation of UDP-3-O-acylglucosamine using 3-hydroxyacyl-ACP as the acyl donor. Is involved in the biosynthesis of lipid A, a phosphorylated glycolipid that anchors the lipopolysaccharide to the outer membrane of the cell. This chain is UDP-3-O-acylglucosamine N-acyltransferase, found in Paraburkholderia phytofirmans (strain DSM 17436 / LMG 22146 / PsJN) (Burkholderia phytofirmans).